The primary structure comprises 156 residues: Mitochondrial intermembrane space cysteine motif-containing protein MIX17 (156 aa).

The transit peptide at 1–21 directs the protein to the mitochondrion; the sequence is MARSRGSSRPISRSRPTQTRS. Positions 1-21 are enriched in low complexity; that stretch reads MARSRGSSRPISRSRPTQTRS. 2 disordered regions span residues 1-50 and 78-110; these read MARS…GAQT and AGIT…QTQT. Polar residues predominate over residues 84-110; the sequence is FSGSGSDSAPVEQQQQNMANTSGQTQT. Positions 115 to 156 constitute a CHCH domain; the sequence is GRTCEIDARNFTRCLDENNGNFQICDYYLQQLKACQEAARQY. The Cx9C motif motif lies at 118-128; the sequence is CEIDARNFTRC. 2 disulfide bridges follow: cysteine 118–cysteine 149 and cysteine 128–cysteine 139.

The protein resides in the mitochondrion intermembrane space. In Saccharomyces cerevisiae (strain ATCC 204508 / S288c) (Baker's yeast), this protein is Mitochondrial intermembrane space cysteine motif-containing protein MIX17 (MIX17).